The following is a 212-amino-acid chain: Probable GTP-binding protein EngB (212 aa).

An EngB-type G domain is found at Ser40–Ala212. Residues Gly48–Ser55, Gly75–Gln79, Asp93–Gly96, Thr160–Asp163, and Val191–Ser193 contribute to the GTP site. Mg(2+) contacts are provided by Ser55 and Thr77.

Belongs to the TRAFAC class TrmE-Era-EngA-EngB-Septin-like GTPase superfamily. EngB GTPase family. The cofactor is Mg(2+).

In terms of biological role, necessary for normal cell division and for the maintenance of normal septation. The chain is Probable GTP-binding protein EngB from Rickettsia akari (strain Hartford).